Here is a 148-residue protein sequence, read N- to C-terminus: Single-stranded DNA-binding protein 2 (148 aa).

The SSB domain maps to 4-109; it reads INSVIIAGNL…IKARRIQFLN (106 aa).

Homotetramer.

The chain is Single-stranded DNA-binding protein 2 (ssb2) from Chlorobaculum tepidum (strain ATCC 49652 / DSM 12025 / NBRC 103806 / TLS) (Chlorobium tepidum).